An 800-amino-acid chain; its full sequence is Endoglucanase (800 aa).

A signal peptide spans 1–30 (MMLRKKTKQLISSILILVLLLSLFPTALAA). Glutamate 190 functions as the Proton donor in the catalytic mechanism. Residue glutamate 305 is the Nucleophile of the active site. The interval 761–800 (AATTEPVEPEPVDPGEETPPVDEKEAKTEQKEAEKEEKEE) is disordered. The segment covering 767–780 (VEPEPVDPGEETPP) has biased composition (acidic residues). The segment covering 781-800 (VDEKEAKTEQKEAEKEEKEE) has biased composition (basic and acidic residues).

Belongs to the glycosyl hydrolase 5 (cellulase A) family.

It carries out the reaction Endohydrolysis of (1-&gt;4)-beta-D-glucosidic linkages in cellulose, lichenin and cereal beta-D-glucans.. The chain is Endoglucanase from Halalkalibacter akibai (strain ATCC 43226 / DSM 21942 / CIP 109018 / JCM 9157 / 1139) (Bacillus akibai).